The primary structure comprises 175 residues: DDB1- and CUL4-associated factor 16 (175 aa).

The tract at residues 1–42 (MGPRNPSPDPLSESESEEEENTNYLNESSGEEWDSSEEEDPV) is disordered. 2 stretches are compositionally biased toward acidic residues: residues 12 to 21 (SESESEEEEN) and 29 to 41 (SGEE…EEDP). Lys-61 carries the N6-acetyllysine modification.

Interacts with DDB1 and CUL4A.

Its subcellular location is the nucleus. The protein operates within protein modification; protein ubiquitination. Its function is as follows. Functions as a substrate recognition component for CUL4-DDB1 E3 ubiquitin-protein ligase complex, which mediates ubiquitination and proteasome-dependent degradation of nuclear proteins. This is DDB1- and CUL4-associated factor 16 (DCAF16) from Bos taurus (Bovine).